Consider the following 649-residue polypeptide: Protein translocase subunit SecA 2 (649 aa).

ATP-binding positions include glutamine 105, 123–127, and aspartate 535; that span reads GEGKT.

It belongs to the SecA family. As to quaternary structure, monomer and homodimer. Part of the essential Sec protein translocation apparatus which comprises SecA, SecYEG and auxiliary proteins SecDF-YajC and YidC.

It is found in the cell inner membrane. The protein localises to the cytoplasm. It carries out the reaction ATP + H2O + cellular proteinSide 1 = ADP + phosphate + cellular proteinSide 2.. Part of the Sec protein translocase complex. Interacts with the SecYEG preprotein conducting channel. Has a central role in coupling the hydrolysis of ATP to the transfer of proteins into and across the cell membrane, serving both as a receptor for the preprotein-SecB complex and as an ATP-driven molecular motor driving the stepwise translocation of polypeptide chains across the membrane. The sequence is that of Protein translocase subunit SecA 2 from Magnetococcus marinus (strain ATCC BAA-1437 / JCM 17883 / MC-1).